The following is a 662-amino-acid chain: Chromosomal replication initiator protein DnaA (662 aa).

Positions 1 to 93 (MDDEQNVLAT…QVEGLGVRIA (93 aa)) are domain I, interacts with DnaA modulators. The domain II stretch occupies residues 93–322 (AAPATPTAER…STPAPANSSA (230 aa)). Positions 96–105 (ATPTAERAAA) are enriched in low complexity. A disordered region spans residues 96-294 (ATPTAERAAA…SDGPVERDDE (199 aa)). Residues 114–123 (SRPERPRGER) show a composition bias toward basic and acidic residues. A compositionally biased stretch (low complexity) spans 166–199 (PPAAEYTPAAEYTPAAEYTPAAEYSPEPEYTPAT). Basic and acidic residues-rich tracts occupy residues 236-248 (TPRRDGHGPRRDA) and 261-290 (PGDRPLRDTDRPLREPAAGHDVRESDGPVE). The interval 323 to 539 (SLNAKYTFET…GALIRVTAFA (217 aa)) is domain III, AAA+ region. ATP contacts are provided by Gly367, Gly369, Lys370, and Thr371. Positions 540-662 (SLNGQPLDLS…LTARIKQRSR (123 aa)) are domain IV, binds dsDNA.

It belongs to the DnaA family. As to quaternary structure, oligomerizes as a right-handed, spiral filament on DNA at oriC.

It is found in the cytoplasm. Its function is as follows. Plays an essential role in the initiation and regulation of chromosomal replication. ATP-DnaA binds to the origin of replication (oriC) to initiate formation of the DNA replication initiation complex once per cell cycle. Binds the DnaA box (a 9 base pair repeat at the origin) and separates the double-stranded (ds)DNA. Forms a right-handed helical filament on oriC DNA; dsDNA binds to the exterior of the filament while single-stranded (ss)DNA is stabiized in the filament's interior. The ATP-DnaA-oriC complex binds and stabilizes one strand of the AT-rich DNA unwinding element (DUE), permitting loading of DNA polymerase. After initiation quickly degrades to an ADP-DnaA complex that is not apt for DNA replication. Binds acidic phospholipids. The polypeptide is Chromosomal replication initiator protein DnaA (Nocardia farcinica (strain IFM 10152)).